The primary structure comprises 292 residues: ATP synthase gamma chain (292 aa).

Belongs to the ATPase gamma chain family. In terms of assembly, F-type ATPases have 2 components, CF(1) - the catalytic core - and CF(0) - the membrane proton channel. CF(1) has five subunits: alpha(3), beta(3), gamma(1), delta(1), epsilon(1). CF(0) has three main subunits: a, b and c.

It localises to the cell membrane. Functionally, produces ATP from ADP in the presence of a proton gradient across the membrane. The gamma chain is believed to be important in regulating ATPase activity and the flow of protons through the CF(0) complex. This is ATP synthase gamma chain from Prosthecochloris aestuarii (strain DSM 271 / SK 413).